Here is a 729-residue protein sequence, read N- to C-terminus: Transketolase (729 aa).

Residue H97 coordinates substrate. Thiamine diphosphate-binding positions include H138 and 186 to 188 (GPL). D227 contributes to the Mg(2+) binding site. Thiamine diphosphate contacts are provided by G228 and N257. Mg(2+)-binding residues include N257 and I259. The substrate site is built by H332, R423, and S450. H332 is a binding site for thiamine diphosphate. The active-site Proton donor is E477. F503 is a binding site for thiamine diphosphate. 3 residues coordinate substrate: H527, D535, and R586.

The protein belongs to the transketolase family. Homodimer. Requires Mg(2+) as cofactor. The cofactor is Ca(2+). It depends on Mn(2+) as a cofactor. Co(2+) serves as cofactor. Thiamine diphosphate is required as a cofactor.

It carries out the reaction D-sedoheptulose 7-phosphate + D-glyceraldehyde 3-phosphate = aldehydo-D-ribose 5-phosphate + D-xylulose 5-phosphate. In terms of biological role, catalyzes the transfer of a two-carbon ketol group from a ketose donor to an aldose acceptor, via a covalent intermediate with the cofactor thiamine pyrophosphate. The sequence is that of Transketolase (tkt) from Streptococcus pyogenes serotype M18 (strain MGAS8232).